We begin with the raw amino-acid sequence, 494 residues long: NADH-quinone oxidoreductase subunit N 2 (494 aa).

Transmembrane regions (helical) follow at residues 14 to 34 (LPQI…GMLL), 45 to 65 (IAML…PLTA), 82 to 102 (VVQV…GSVL), 116 to 136 (IGEF…LVST), 139 to 159 (LLLI…LTAF), 174 to 194 (FLFG…LYGV), 214 to 234 (LLVA…AAPF), 262 to 282 (FFVF…NAAW), 289 to 309 (WMPI…LAAL), 317 to 337 (LLAY…IAHT), 344 to 364 (LLYY…VLAI), 388 to 408 (ACLL…GFFA), 422 to 442 (AFGL…ALFY), and 470 to 490 (ITLL…NLLM).

Belongs to the complex I subunit 2 family. NDH-1 is composed of 14 different subunits. Subunits NuoA, H, J, K, L, M, N constitute the membrane sector of the complex.

Its subcellular location is the cell inner membrane. The catalysed reaction is a quinone + NADH + 5 H(+)(in) = a quinol + NAD(+) + 4 H(+)(out). NDH-1 shuttles electrons from NADH, via FMN and iron-sulfur (Fe-S) centers, to quinones in the respiratory chain. The immediate electron acceptor for the enzyme in this species is believed to be ubiquinone. Couples the redox reaction to proton translocation (for every two electrons transferred, four hydrogen ions are translocated across the cytoplasmic membrane), and thus conserves the redox energy in a proton gradient. The polypeptide is NADH-quinone oxidoreductase subunit N 2 (Acidobacterium capsulatum (strain ATCC 51196 / DSM 11244 / BCRC 80197 / JCM 7670 / NBRC 15755 / NCIMB 13165 / 161)).